The sequence spans 324 residues: MSEIDLEDLPGVGATTAEKLREAGYGTVESVATATTSDLAEAAEIGEATAKKVILAARKMADIGGFKTGRDILDKRKDIKKLRTLVPEFDELVGGGLETQAITEVYGEFGSGKSQLVHQMAVNAQLPEELGGLGGGVIYVDTENTFRPERIEQMLNGLPEEAEIGEIEEVLERIHVARAHSSDHQMLLLETARELANDLRTSDYPVRLFVIDSLTSLFRSEYAGRGTLAPRQQKLNRHMHDLLKLIDDHNAVGLVTNQVMSNPGILFGDPTKPIGGNIVGHTATFRLYLRKSKGGKRVARLVDSPNLPEGEAAFMVEQAGLKPC.

Gly107–Ser114 provides a ligand contact to ATP.

It belongs to the eukaryotic RecA-like protein family.

Its function is as follows. Involved in DNA repair and in homologous recombination. Binds and assemble on single-stranded DNA to form a nucleoprotein filament. Hydrolyzes ATP in a ssDNA-dependent manner and promotes DNA strand exchange between homologous DNA molecules. This Methanoculleus marisnigri (strain ATCC 35101 / DSM 1498 / JR1) protein is DNA repair and recombination protein RadA.